A 530-amino-acid chain; its full sequence is Cytochrome P450 monooxygenase aneG (530 aa).

A glycan (N-linked (GlcNAc...) asparagine) is linked at N2. Residues 43-63 (WLSILGFTIGCYYVIYTFYAL) traverse the membrane as a helical segment. A glycan (N-linked (GlcNAc...) asparagine) is linked at N92. C474 provides a ligand contact to heme.

Belongs to the cytochrome P450 family. The cofactor is heme.

It localises to the membrane. It catalyses the reaction asperaculane E + reduced [NADPH--hemoprotein reductase] + O2 = asperaculane G + oxidized [NADPH--hemoprotein reductase] + H2O + H(+). The catalysed reaction is asperaculane G + reduced [NADPH--hemoprotein reductase] + O2 = aculene D + oxidized [NADPH--hemoprotein reductase] + CO2 + 2 H2O. It carries out the reaction asperaculane E + 2 reduced [NADPH--hemoprotein reductase] + 2 O2 = aculene D + 2 oxidized [NADPH--hemoprotein reductase] + CO2 + 3 H2O + H(+). The protein operates within secondary metabolite biosynthesis. In terms of biological role, cytochrome P450 monooxygenase; part of the gene cluster that mediates the biosynthesis of aculenes, a unique type of norsesquiterpenes that contain a nordaucane skeleton linked to an L-proline moiety and are of mixed biosynthetic origin. The pathway begins with the synthesis of dauca-4,7-diene by the terpene cyclase aneC using farnesyl pyrophosphate (FPP) as substrate. The cytochrome P450 monooxygenase aneF then performs the initial oxidation at C-12 of dauca-4,7-diene to yield asperaculane D. Asperaculane D is substrate of the cytochrome P450 monooxygenase aneD for C-10 hydroxylation to yield asperaculane E. The cytochrome P450 monooxygenase aneG then converts asperaculane E into aculene D via C-2 oxidation. The monomodular nonribosomal peptide synthtase aneB adenylates L-proline and the thiohydrolase aneE transfers this activated L-proline derivative to aculenes D and C to produce respectively aculenes B and A. The dioxygenase aneA converts aculene D into aculene C, and aculene B into aculene A by introducing the 5,6-alkene moiety. Asperculanes A, B, C and F, as well as 14-prolyl asperculane C, might be shunt products of the pathway. The polypeptide is Cytochrome P450 monooxygenase aneG (Aspergillus aculeatus (strain ATCC 16872 / CBS 172.66 / WB 5094)).